Reading from the N-terminus, the 349-residue chain is MEFTLEEIAHLLGGEVKGDGKAKVSSIAKIEEASSGSISFLSNPKYESFIYSTNASAVIVKKDFQPRESLKTSLILVDDPYTSFTTILEAYQQALNASKMGKEEPSFIGKNAVIGSNHYIGAFAYIGSNCKIGNNVKIYPQAYIGDNVTIGDNTTIYAGVKIYANCELGNQVTIHSGCVIGSDGFGFAPQADGTYKTIPQIGNVVIGNHVDIGANTVIDCATMGSTIIYDGVKIDNLIQIAHNVKIGKNTVIAAQAGISGSTTIGENCIIAGQVGIIGHIKIANKTTIAAQAGIGRTISEEGLTLLGSPAIEKLDFLKSFAIYRKLPTLQKRIEELEEKTLNLSGIKES.

H242 acts as the Proton acceptor in catalysis.

It belongs to the transferase hexapeptide repeat family. LpxD subfamily. Homotrimer.

The enzyme catalyses a UDP-3-O-[(3R)-3-hydroxyacyl]-alpha-D-glucosamine + a (3R)-hydroxyacyl-[ACP] = a UDP-2-N,3-O-bis[(3R)-3-hydroxyacyl]-alpha-D-glucosamine + holo-[ACP] + H(+). It participates in bacterial outer membrane biogenesis; LPS lipid A biosynthesis. In terms of biological role, catalyzes the N-acylation of UDP-3-O-acylglucosamine using 3-hydroxyacyl-ACP as the acyl donor. Is involved in the biosynthesis of lipid A, a phosphorylated glycolipid that anchors the lipopolysaccharide to the outer membrane of the cell. This Cytophaga hutchinsonii (strain ATCC 33406 / DSM 1761 / CIP 103989 / NBRC 15051 / NCIMB 9469 / D465) protein is UDP-3-O-acylglucosamine N-acyltransferase.